Consider the following 456-residue polypeptide: MGALDEGHYHAEIDNEVSFELGFETQPETLVIQDAVRVLLQGLGEDINREGIKKTPFRVAKALRQGTRGYKQKVNDIVHGALFPEAGLEGGSGQAGGVGGLVIVRDLDLFSYCESCLLPFQVKCHVGYVPSGKRVVGLSKLSRVADIFAKRLQSPQRLADEVCTALQHGIKPTGVAVVLQCMHIHFPNFESAFLDSTSQGWVKITATSGSGVFEDGNADVWTDFWSLLKFRGISIDNAHRRSSGQSWCPSQSCGMPGQANSAMTNAVNSILKSLGEDPLREELVETPSRFVKWFMNFRNSNLEMKLNGFVRSRIDTRSPQGGNFNDGICSELNLSFWSQCEHHLLPFQGVVHIGYHSSDGVNPVGRPLVQSVVHFYGFKLQVQERVTRQIAETVSSFLGEDIIVVVEANHTCMISRGIEKFGSNTATFAVLGRFSTDPVARAKFLQSLPDSGSAGR.

Residues Cys340, His343, and Cys412 each coordinate Zn(2+).

The protein belongs to the GTP cyclohydrolase I family. Homodimer. In terms of tissue distribution, expressed in leaves and unripe fruits.

It catalyses the reaction GTP + H2O = 7,8-dihydroneopterin 3'-triphosphate + formate + H(+). Its pathway is cofactor biosynthesis; 7,8-dihydroneopterin triphosphate biosynthesis; 7,8-dihydroneopterin triphosphate from GTP: step 1/1. In terms of biological role, GTP cyclohydrolase 1 is the first enzyme in the biosynthetic pathway leading to folic acid. In Solanum lycopersicum (Tomato), this protein is GTP cyclohydrolase 1 (GCH1).